We begin with the raw amino-acid sequence, 348 residues long: 3-keto-steroid reductase (348 aa).

The NADP(+) site is built by leucine 18, threonine 41, and arginine 47. Residues serine 180 and tyrosine 203 each act as proton donor in the active site. Tyrosine 203, lysine 207, and serine 238 together coordinate NADP(+). Lysine 207 functions as the Lowers pKa of active site Tyr in the catalytic mechanism.

The protein belongs to the short-chain dehydrogenases/reductases (SDR) family. ERG27 subfamily.

The catalysed reaction is a 3beta-hydroxysteroid + NADP(+) = a 3-oxosteroid + NADPH + H(+). It functions in the pathway steroid biosynthesis; zymosterol biosynthesis; zymosterol from lanosterol: step 5/6. Functionally, responsible for the reduction of the keto group on the C-3 of sterols. The polypeptide is 3-keto-steroid reductase (ERG27) (Candida glabrata (strain ATCC 2001 / BCRC 20586 / JCM 3761 / NBRC 0622 / NRRL Y-65 / CBS 138) (Yeast)).